Here is a 646-residue protein sequence, read N- to C-terminus: Microtubule-associated protein 9 (646 aa).

Ser-2 is modified (N-acetylserine). Tyr-12 is modified (phosphotyrosine). Disordered regions lie at residues 75–226, 242–418, 491–511, 531–554, 570–597, and 609–646; these read DFHI…QTEE, SLTS…LEPD, RLEE…KGEA, RREK…KKKD, LKQK…KDKQ, and KERQ…SKVF. Composition is skewed to polar residues over residues 105 to 119 and 157 to 167; these read ALDS…SSPD and RSTSSGETSSG. The span at 188-204 shows a compositional bias: basic and acidic residues; sequence SHTEEGVRPGVDKEHSI. 3 stretches are compositionally biased toward polar residues: residues 205–222, 280–291, and 330–340; these read SEAS…GTEL, LLSNENEGSSVL, and PLLSTSPSVIT. Over residues 346 to 357 the composition is skewed to basic and acidic residues; that stretch reads EPAKKANEDRNT. Polar residues predominate over residues 386–398; sequence TKRSPSAATSSHY. Over residues 405 to 418 the composition is skewed to basic and acidic residues; the sequence is LDQKQPRKQSLEPD. Residues 442–596 adopt a coiled-coil conformation; sequence MHRIKRIESE…KRAEKKDKDK (155 aa). The span at 637 to 646 shows a compositional bias: polar residues; that stretch reads PSRTAPSKVF.

In terms of assembly, binds to purified microtubules via its C-terminus.

Its subcellular location is the cytoplasm. The protein localises to the cytoskeleton. It localises to the spindle. Involved in organization of the bipolar mitotic spindle. Required for bipolar spindle assembly, mitosis progression and cytokinesis. May act by stabilizing interphase microtubules. This chain is Microtubule-associated protein 9 (Map9), found in Mus musculus (Mouse).